We begin with the raw amino-acid sequence, 189 residues long: dTTP/UTP pyrophosphatase (189 aa).

Catalysis depends on Asp-71, which acts as the Proton acceptor.

The protein belongs to the Maf family. YhdE subfamily. A divalent metal cation is required as a cofactor.

It is found in the cytoplasm. It catalyses the reaction dTTP + H2O = dTMP + diphosphate + H(+). The enzyme catalyses UTP + H2O = UMP + diphosphate + H(+). Nucleoside triphosphate pyrophosphatase that hydrolyzes dTTP and UTP. May have a dual role in cell division arrest and in preventing the incorporation of modified nucleotides into cellular nucleic acids. This Pseudoalteromonas translucida (strain TAC 125) protein is dTTP/UTP pyrophosphatase.